The chain runs to 142 residues: ATP synthase epsilon chain (142 aa).

The protein belongs to the ATPase epsilon chain family. As to quaternary structure, F-type ATPases have 2 components, CF(1) - the catalytic core - and CF(0) - the membrane proton channel. CF(1) has five subunits: alpha(3), beta(3), gamma(1), delta(1), epsilon(1). CF(0) has three main subunits: a, b and c.

It localises to the cell inner membrane. Produces ATP from ADP in the presence of a proton gradient across the membrane. This chain is ATP synthase epsilon chain, found in Shewanella sediminis (strain HAW-EB3).